The primary structure comprises 431 residues: Glutamate--tRNA ligase 1 (431 aa).

The short motif at 6-16 is the 'HIGH' region element; it reads PSPTGDMHIGN. Residues 235–239 carry the 'KMSKS' region motif; that stretch reads KMSKR. K238 is a binding site for ATP.

Belongs to the class-I aminoacyl-tRNA synthetase family. Glutamate--tRNA ligase type 1 subfamily. In terms of assembly, monomer.

It is found in the cytoplasm. The catalysed reaction is tRNA(Glu) + L-glutamate + ATP = L-glutamyl-tRNA(Glu) + AMP + diphosphate. Functionally, catalyzes the attachment of glutamate to tRNA(Glu) in a two-step reaction: glutamate is first activated by ATP to form Glu-AMP and then transferred to the acceptor end of tRNA(Glu). The chain is Glutamate--tRNA ligase 1 from Campylobacter jejuni subsp. jejuni serotype O:6 (strain 81116 / NCTC 11828).